The primary structure comprises 175 residues: Ribosome maturation factor RimM (175 aa).

One can recognise a PRC barrel domain in the interval 95-175; that stretch reads SEDEFYWREL…RIEVDWDPGF (81 aa).

It belongs to the RimM family. In terms of assembly, binds ribosomal protein uS19.

The protein resides in the cytoplasm. Functionally, an accessory protein needed during the final step in the assembly of 30S ribosomal subunit, possibly for assembly of the head region. Essential for efficient processing of 16S rRNA. May be needed both before and after RbfA during the maturation of 16S rRNA. It has affinity for free ribosomal 30S subunits but not for 70S ribosomes. In Aliivibrio salmonicida (strain LFI1238) (Vibrio salmonicida (strain LFI1238)), this protein is Ribosome maturation factor RimM.